A 472-amino-acid polypeptide reads, in one-letter code: Envelope glycoprotein O (472 aa).

The N-terminal stretch at 1–31 (MGKKEMIMVKGIPKIMLLISITFLLLSLINC) is a signal peptide. Asparagine 109, asparagine 136, asparagine 163, asparagine 168, asparagine 177, asparagine 225, asparagine 248, asparagine 294, asparagine 298, asparagine 356, asparagine 391, asparagine 398, asparagine 405, asparagine 439, and asparagine 460 each carry an N-linked (GlcNAc...) asparagine; by host glycan.

Belongs to the herpesviridae U47 family. As to quaternary structure, forms the envelope trimer complex composed of gH, gL, and gO. The trimer interacts with host PDGFRA. Post-translationally, N-glycosylated. The N-terminus is blocked.

It localises to the virion membrane. In terms of biological role, plays a role in viral entry into host cells. Forms a trimeric complex at the surface of the viral envelope together with gH and gL. This complex is required for entry in host fibroblasts. Mechanistically, engages host receptor(s) including PDGFRA to mediate infection. This chain is Envelope glycoprotein O (UL74), found in Human cytomegalovirus (strain Merlin) (HHV-5).